The following is a 2371-amino-acid chain: Reducing polyketide synthase DEP5 (2371 aa).

One can recognise a Ketosynthase family 3 (KS3) domain in the interval 47 to 477 (LEPIAVVGMG…GTNAHTIIES (431 aa)). Residues Cys-221, His-358, and His-399 each act as for beta-ketoacyl synthase activity in the active site. Positions 593 to 905 (VFTGQGAQWA…QYLPTLIRGS (313 aa)) are malonyl-CoA:ACP transacylase (MAT) domain. The For malonyltransferase activity role is filled by Ser-685. The N-terminal hotdog fold stretch occupies residues 982–1120 (HDVLGQLTIG…GSIRINTSNK (139 aa)). Residues 982–1158 (HDVLGQLTIG…FNYGPTFQDM (177 aa)) form a dehydratase (DH) domain region. Residues 982 to 1286 (HDVLGQLTIG…CTAYEAAIPQ (305 aa)) enclose the PKS/mFAS DH domain. The active-site Proton acceptor; for dehydratase activity is His-1014. The interval 1132-1286 (PQRASGKLWN…CTAYEAAIPQ (155 aa)) is C-terminal hotdog fold. Asp-1195 serves as the catalytic Proton donor; for dehydratase activity. The tract at residues 1656 to 1964 (GKVEAGKVVF…QSLSSTETVL (309 aa)) is enoyl reductase (ER) domain. The segment at 1988–2163 (ATYLLVGCLG…KHACAVVLPM (176 aa)) is ketoreductase (KR) domain. The Carrier domain maps to 2286–2364 (SLVRDHFISK…KFAELVCAAQ (79 aa)). Residue Ser-2323 is modified to O-(pantetheine 4'-phosphoryl)serine.

It participates in polyketide biosynthesis. Its function is as follows. Part of the gene cluster that mediates the biosynthesis of depudecin, a highly oxidized eleven-carbon linear polyketide that acts as a histone deacetylase (HDAC) inhibitor and makes a small contribution to pathogenesis. The reducing polyketide synthase DEP5 is the central enzyme in depudecin biosynthesis by yielding the backbone polyketide chain. The monooxygenases DEP2 and DEP4, as well as the uncharacterized protein DEP1, then act as tailoring enzymes to modify the intermediate polyketide chain into depudecin. In Fusarium langsethiae, this protein is Reducing polyketide synthase DEP5.